A 397-amino-acid chain; its full sequence is Enoyl-[acyl-carrier-protein] reductase [NADH] (397 aa).

Residues 48-53 (GASTGY), 74-75 (FE), 111-112 (DA), and 139-140 (VA) contribute to the NAD(+) site. Tyr-225 contributes to the substrate binding site. Tyr-235 functions as the Proton donor in the catalytic mechanism. Residues Lys-244 and 273–275 (VVT) contribute to the NAD(+) site.

The protein belongs to the TER reductase family. Monomer.

It catalyses the reaction a 2,3-saturated acyl-[ACP] + NAD(+) = a (2E)-enoyl-[ACP] + NADH + H(+). Its pathway is lipid metabolism; fatty acid biosynthesis. Functionally, involved in the final reduction of the elongation cycle of fatty acid synthesis (FAS II). Catalyzes the reduction of a carbon-carbon double bond in an enoyl moiety that is covalently linked to an acyl carrier protein (ACP). In Burkholderia thailandensis (strain ATCC 700388 / DSM 13276 / CCUG 48851 / CIP 106301 / E264), this protein is Enoyl-[acyl-carrier-protein] reductase [NADH].